Reading from the N-terminus, the 136-residue chain is Histone H2A (136 aa).

Residues 1-11 (MSSGGKSGGKA) are compositionally biased toward gly residues. The segment at 1–24 (MSSGGKSGGKAGDASSKAQSRSAK) is disordered. N6-acetyllysine is present on residues Lys6 and Lys10. Residues 12–24 (GDASSKAQSRSAK) show a composition bias toward low complexity. Gln108 bears the N5-methylglutamine mark. Ser133 is modified (phosphoserine). The [ST]-Q motif signature appears at 133–134 (SQ).

Belongs to the histone H2A family. The nucleosome is a histone octamer containing two molecules each of H2A, H2B, H3 and H4 assembled in one H3-H4 heterotetramer and two H2A-H2B heterodimers. The octamer wraps approximately 147 bp of DNA. Post-translationally, phosphorylated to form H2AS128ph (gamma-H2A) in response to DNA double-strand breaks (DSBs) generated by exogenous genotoxic agents and by stalled replication forks. Phosphorylation is dependent on the DNA damage checkpoint kinases MEC1/ATR and TEL1/ATM, spreads on either side of a detected DSB site and may mark the surrounding chromatin for recruitment of proteins required for DNA damage signaling and repair. Gamma-H2A is removed from the DNA prior to the strand invasion-primer extension step of the repair process and subsequently dephosphorylated. Dephosphorylation is necessary for efficient recovery from the DNA damage checkpoint. In terms of processing, acetylated by ESA1 to form H2AK4ac and H2AK7ac.

It is found in the nucleus. It localises to the chromosome. Functionally, core component of nucleosome which plays a central role in DNA double strand break (DSB) repair. Nucleosomes wrap and compact DNA into chromatin, limiting DNA accessibility to the cellular machineries which require DNA as a template. Histones thereby play a central role in transcription regulation, DNA repair, DNA replication and chromosomal stability. DNA accessibility is regulated via a complex set of post-translational modifications of histones, also called histone code, and nucleosome remodeling. The chain is Histone H2A (HTA1) from Mycosarcoma maydis (Corn smut fungus).